The following is a 370-amino-acid chain: MRTSILSMLALGAAAVSAAPAAAAAPAELVERGSSCTFTSASAAKAGKKSCSSIVLDNIKVPAGETLDLSNLKSGTKVTFKGETTFGYKEWKGPLIRFSGKNIEVNGASGHVINGGGASWWDGKGTNGGKTKPKFFYAHSLDDSTITGLNVKNTPVQGFSVQADNLVLDHITIDNTDGDKTNGGHNTDAFDVGESTYITISNANIKNQDDCLAINSGENIIFTGGTCSGGHGLSIGSVGGRDDNTVKNVTISDSTVSNSDNGIRIKTIYKAKGEVADVTFSNIELSNIAKYGIVIEQDYENGSPTGKPTTGVPITGLTVEKVTGSVKSSGTDVYILCGSGSCSDWTWSGNKVSGGKTSSKCKNVPSGASC.

Positions 1–18 (MRTSILSMLALGAAAVSA) are cleaved as a signal peptide. Cys36 and Cys51 are disulfide-bonded. PbH1 repeat units follow at residues 163-194 (ADNLVLDHITIDNTDGDKTNGGHNTDAFDVGE), 195-216 (STYITISNANIKNQDDCLAINS), 217-237 (GENIIFTGGTCSGGHGLSIGS), 246-267 (VKNVTISDSTVSNSDNGIRIKT), and 275-297 (VADVTFSNIELSNIAKYGIVIEQ). Asp209 (proton donor) is an active-site residue. The cysteines at positions 211 and 227 are disulfide-linked. His231 is an active-site residue. The N-linked (GlcNAc...) asparagine glycan is linked to Asn248. Intrachain disulfides connect Cys337–Cys342 and Cys361–Cys370.

The protein belongs to the glycosyl hydrolase 28 family.

Its subcellular location is the secreted. It catalyses the reaction (1,4-alpha-D-galacturonosyl)n+m + H2O = (1,4-alpha-D-galacturonosyl)n + (1,4-alpha-D-galacturonosyl)m.. This chain is Polygalacturonase 1 (PG1), found in Penicillium olsonii.